A 121-amino-acid polypeptide reads, in one-letter code: Prefoldin subunit beta (121 aa).

This sequence belongs to the prefoldin subunit beta family. Heterohexamer of two alpha and four beta subunits.

It localises to the cytoplasm. Its function is as follows. Molecular chaperone capable of stabilizing a range of proteins. Seems to fulfill an ATP-independent, HSP70-like function in archaeal de novo protein folding. The chain is Prefoldin subunit beta from Methanosphaerula palustris (strain ATCC BAA-1556 / DSM 19958 / E1-9c).